A 458-amino-acid chain; its full sequence is Retinoic acid receptor gamma (458 aa).

The interval 1–89 (MATNKERLFA…PPPPPRVYKP (89 aa)) is modulating. Arginine 34 carries the omega-N-methylarginine modification. Positions 58–83 (MASLSVETQSTSSEEMVPSSPSPPPP) are disordered. Residues 62–71 (SVETQSTSSE) show a composition bias toward polar residues. 2 NR C4-type zinc fingers span residues 90–110 (CFVC…CEGC) and 126–150 (CHRD…LQKC). Residues 90–155 (CFVCNDKSSG…RLQKCFEVGM (66 aa)) constitute a DNA-binding region (nuclear receptor). The interval 156 to 184 (SKEAVRNDRNKKKKEVKEEGSPDSYELSP) is hinge. Positions 161–180 (RNDRNKKKKEVKEEGSPDSY) are disordered. Glycyl lysine isopeptide (Lys-Gly) (interchain with G-Cter in SUMO2) cross-links involve residues lysine 172 and lysine 401. Positions 185-419 (QLEELITKVS…PLIREMLENP (235 aa)) constitute an NR LBD domain. The interval 409–458 (PPLIREMLENPEMFEDDSSKPGPHPKASSEDEAPGGQGKRGQSPQPDQGP) is disordered. A compositionally biased stretch (polar residues) spans 448–458 (RGQSPQPDQGP).

The protein belongs to the nuclear hormone receptor family. NR1 subfamily. Homodimer. Heterodimer with a RXR molecule. Binds DNA preferentially as a RAR/RXR heterodimer. Forms a complex with PUS1 and the SRA1 RNA in the nucleus.

Its subcellular location is the nucleus. The protein resides in the cytoplasm. Functionally, receptor for retinoic acid. Retinoic acid receptors bind as heterodimers to their target response elements in response to their ligands, all-trans or 9-cis retinoic acid, and regulate gene expression in various biological processes. The RAR/RXR heterodimers bind to the retinoic acid response elements (RARE) composed of tandem 5'-AGGTCA-3' sites known as DR1-DR5. In the absence of ligand, acts mainly as an activator of gene expression due to weak binding to corepressors. Required for limb bud development. In concert with RARA or RARB, required for skeletal growth, matrix homeostasis and growth plate function. The chain is Retinoic acid receptor gamma (Rarg) from Mus musculus (Mouse).